We begin with the raw amino-acid sequence, 154 residues long: Interleukin-7 (154 aa).

A signal peptide spans 1–25 (MFHVSFRYIFGIPPLILVLLPVTSS). 3 cysteine pairs are disulfide-bonded: C27–C145, C58–C133, and C71–C116. N-linked (GlcNAc...) asparagine glycosylation is found at N94 and N115.

Belongs to the IL-7/IL-9 family. As to quaternary structure, interacts with IL7R and CSF2RG. Three disulfide bonds are present.

The protein resides in the secreted. Functionally, hematopoietic cytokine that plays an essential role in the development, expansion, and survival of naive and memory T-cells and B-cells thereby regulating the number of mature lymphocytes and maintaining lymphoid homeostasis. Mechanistically, exerts its biological effects through a receptor composed of IL7RA subunit and the cytokine receptor common subunit gamma/CSF2RG. Binding to the receptor leads to activation of various kinases including JAK1 or JAK3 depending on the cell type and subsequently propagation of signals through activation of several downstream signaling pathways including the PI3K/Akt/mTOR or the JAK-STAT5. This chain is Interleukin-7 (Il7), found in Mus musculus (Mouse).